The primary structure comprises 151 residues: UPF0756 membrane protein Hore_21770 (151 aa).

A run of 5 helical transmembrane segments spans residues 7-29 (LLII…GLLL), 49-69 (IEIG…LSPV), 84-104 (TVAI…LDLL), 110-130 (FILG…GIPV), and 131-151 (GPLM…IIKG).

This sequence belongs to the UPF0756 family.

The protein resides in the cell membrane. The sequence is that of UPF0756 membrane protein Hore_21770 from Halothermothrix orenii (strain H 168 / OCM 544 / DSM 9562).